Reading from the N-terminus, the 554-residue chain is Phosphomethylpyrimidine synthase (554 aa).

Substrate contacts are provided by residues Asn-188, Met-217, Tyr-246, His-282, 302 to 304 (SRG), 343 to 346 (DGLR), and Glu-382. His-386 is a binding site for Zn(2+). Substrate is bound at residue Tyr-409. His-450 contacts Zn(2+). Cys-530, Cys-533, and Cys-538 together coordinate [4Fe-4S] cluster.

The protein belongs to the ThiC family. Homodimer. The cofactor is [4Fe-4S] cluster.

It catalyses the reaction 5-amino-1-(5-phospho-beta-D-ribosyl)imidazole + S-adenosyl-L-methionine = 4-amino-2-methyl-5-(phosphooxymethyl)pyrimidine + CO + 5'-deoxyadenosine + formate + L-methionine + 3 H(+). It functions in the pathway cofactor biosynthesis; thiamine diphosphate biosynthesis. In terms of biological role, catalyzes the synthesis of the hydroxymethylpyrimidine phosphate (HMP-P) moiety of thiamine from aminoimidazole ribotide (AIR) in a radical S-adenosyl-L-methionine (SAM)-dependent reaction. The polypeptide is Phosphomethylpyrimidine synthase (Coxiella burnetii (strain Dugway 5J108-111)).